Reading from the N-terminus, the 226-residue chain is Flagellar L-ring protein (226 aa).

The signal sequence occupies residues 1–15 (MRILGLSAALLILGG). Cys-16 is lipidated: N-palmitoyl cysteine. Cys-16 carries S-diacylglycerol cysteine lipidation.

This sequence belongs to the FlgH family. As to quaternary structure, the basal body constitutes a major portion of the flagellar organelle and consists of four rings (L,P,S, and M) mounted on a central rod.

It is found in the cell outer membrane. Its subcellular location is the bacterial flagellum basal body. Assembles around the rod to form the L-ring and probably protects the motor/basal body from shearing forces during rotation. This chain is Flagellar L-ring protein, found in Alteromonas mediterranea (strain DSM 17117 / CIP 110805 / LMG 28347 / Deep ecotype).